Consider the following 557-residue polypeptide: Tight junction-associated protein 1 (557 aa).

The disordered stretch occupies residues 1–37 (MTSAAPAKKPYRKAPPEHRELRLEIPGSRLEQEEPLT). Threonine 2 is subject to N-acetylthreonine. Positions 14–23 (APPEHRELRL) are enriched in basic and acidic residues. Residues 42-171 (MKLLQEENEE…EELNERYRLD (130 aa)) adopt a coiled-coil conformation. 2 disordered regions span residues 266–303 (MSEG…SPEE) and 309–328 (AFEK…LYPG). A compositionally biased stretch (pro residues) spans 274–286 (PASPPAPGSPTPQ). Phosphoserine is present on serine 300. Residues 316–325 (YPTPSPPHPL) are compositionally biased toward pro residues. The residue at position 318 (threonine 318) is a Phosphothreonine. 2 positions are modified to phosphoserine: serine 320 and serine 345. The disordered stretch occupies residues 364-409 (EEGSERARPSPVPSTPASAQASPHHQPSPAPLTLSAPASSASSEED). The span at 378 to 388 (TPASAQASPHH) shows a compositional bias: polar residues. Residues 394-405 (PLTLSAPASSAS) are compositionally biased toward low complexity. At threonine 422 the chain carries Phosphothreonine. Basic and acidic residues predominate over residues 439–456 (LPELQRHFAHSPADRDEV). Residues 439–557 (LPELQRHFAH…QAQEQGNLLN (119 aa)) are disordered. At serine 491 the chain carries Phosphoserine. The segment covering 530 to 542 (RSPKRMGVHHLHR) has biased composition (basic residues). Residue serine 545 is modified to Phosphoserine. A compositionally biased stretch (polar residues) spans 546 to 557 (LTQAQEQGNLLN).

Interacts with DLG1. Interacts with ARF6 (GTP-bound form). Ubiquitously expressed.

Its subcellular location is the golgi apparatus. The protein localises to the trans-Golgi network. The protein resides in the cell junction. It localises to the tight junction. It is found in the cell membrane. Plays a role in regulating the structure of the Golgi apparatus. In Homo sapiens (Human), this protein is Tight junction-associated protein 1.